Here is a 116-residue protein sequence, read N- to C-terminus: uncharacterized protein (116 aa).

The helical transmembrane segment at 58–78 threads the bilayer; the sequence is IIVDFKFIFQIFLILSFGFFA.

It localises to the membrane. This is an uncharacterized protein from Rickettsia prowazekii (strain Madrid E).